Here is a 145-residue protein sequence, read N- to C-terminus: Hemoglobin subunit beta (145 aa).

Residues 1–145 (MLTAEEKAAV…VANALAHRYH (145 aa)) form the Globin domain. T11 bears the Phosphothreonine mark. K58 is modified (N6-acetyllysine). Residue H62 participates in heme b binding. K81 is subject to N6-acetyllysine. H91 is a heme b binding site. The residue at position 92 (C92) is an S-nitrosocysteine.

This sequence belongs to the globin family. Heterotetramer of two alpha chains and two beta chains. As to expression, red blood cells.

Involved in oxygen transport from the lung to the various peripheral tissues. The polypeptide is Hemoglobin subunit beta (HBB) (Ovis aries musimon (Mouflon)).